The following is a 423-amino-acid chain: Imidazolonepropionase (423 aa).

Fe(3+) is bound by residues His78 and His80. Zn(2+) contacts are provided by His78 and His80. 4-imidazolone-5-propanoate contacts are provided by Arg87, Tyr150, and His183. Tyr150 contributes to the N-formimidoyl-L-glutamate binding site. His247 contributes to the Fe(3+) binding site. His247 provides a ligand contact to Zn(2+). Glu250 provides a ligand contact to 4-imidazolone-5-propanoate. A Fe(3+)-binding site is contributed by Asp322. Asp322 contributes to the Zn(2+) binding site. Asn324 and Gly326 together coordinate N-formimidoyl-L-glutamate. 4-imidazolone-5-propanoate is bound at residue Ser327.

This sequence belongs to the metallo-dependent hydrolases superfamily. HutI family. Requires Zn(2+) as cofactor. Fe(3+) serves as cofactor.

The protein localises to the cytoplasm. The catalysed reaction is 4-imidazolone-5-propanoate + H2O = N-formimidoyl-L-glutamate. Its pathway is amino-acid degradation; L-histidine degradation into L-glutamate; N-formimidoyl-L-glutamate from L-histidine: step 3/3. Catalyzes the hydrolytic cleavage of the carbon-nitrogen bond in imidazolone-5-propanoate to yield N-formimidoyl-L-glutamate. It is the third step in the universal histidine degradation pathway. This is Imidazolonepropionase from Bacillus cytotoxicus (strain DSM 22905 / CIP 110041 / 391-98 / NVH 391-98).